Consider the following 447-residue polypeptide: UPF0328 protein ECU10_1870 (447 aa).

Composition is skewed to basic and acidic residues over residues 1–10 (MPSDHPDFRS) and 64–84 (HTEGCHTHEANPEPNTKHTET). 2 disordered regions span residues 1–103 (MPSD…TATP) and 147–173 (VKSQSVSHRAPITYQPPRPTTTSNPRI). Pro residues predominate over residues 92 to 103 (CPPPHPGPTATP).

Belongs to the UPF0328 family.

This is UPF0328 protein ECU10_1870 from Encephalitozoon cuniculi (strain GB-M1) (Microsporidian parasite).